The following is a 387-amino-acid chain: Sialic acid-binding Ig-like lectin 13 (387 aa).

The signal sequence occupies residues 1–15 (MLPLLLPLLWAGALA). One can recognise an Ig-like V-type domain in the interval 16–138 (LEGIFQLEVP…KDPPLSVHVT (123 aa)). Residues 16 to 341 (LEGIFQLEVP…QRKSGPMAEV (326 aa)) lie on the Extracellular side of the membrane. Cystine bridges form between Cys-35–Cys-168, Cys-40–Cys-100, and Cys-162–Cys-211. A glycan (N-linked (GlcNAc...) asparagine) is linked at Asn-99. Arg-118 lines the N-acetylneuraminate pocket. Residues 144 to 227 (PDILIPGALK…AGVTTTRTVR (84 aa)) form the Ig-like C2-type 1 domain. Residues Asn-229, Asn-236, and Asn-254 are each glycosylated (N-linked (GlcNAc...) asparagine). The Ig-like C2-type 2 domain maps to 234–326 (PQNLTLTVFQ…RNPLGSQQVS (93 aa)). Cys-270 and Cys-314 are disulfide-bonded. Residues 342-362 (VLVAIGEAAVKILLLFLCLII) form a helical membrane-spanning segment. The Cytoplasmic portion of the chain corresponds to 363-387 (LRVKSHRRKAAKAATGVEAAKVVKG).

Belongs to the immunoglobulin superfamily. SIGLEC (sialic acid binding Ig-like lectin) family.

The protein localises to the membrane. Its function is as follows. Putative adhesion molecule that mediates sialic-acid dependent binding to cells. This chain is Sialic acid-binding Ig-like lectin 13 (SIGLEC13), found in Pan troglodytes (Chimpanzee).